Consider the following 633-residue polypeptide: Glutamyl-tRNA(Gln) amidotransferase subunit E (633 aa).

This sequence belongs to the GatB/GatE family. GatE subfamily. As to quaternary structure, heterodimer of GatD and GatE.

The catalysed reaction is L-glutamyl-tRNA(Gln) + L-glutamine + ATP + H2O = L-glutaminyl-tRNA(Gln) + L-glutamate + ADP + phosphate + H(+). Functionally, allows the formation of correctly charged Gln-tRNA(Gln) through the transamidation of misacylated Glu-tRNA(Gln) in organisms which lack glutaminyl-tRNA synthetase. The reaction takes place in the presence of glutamine and ATP through an activated gamma-phospho-Glu-tRNA(Gln). The GatDE system is specific for glutamate and does not act on aspartate. The polypeptide is Glutamyl-tRNA(Gln) amidotransferase subunit E (Methanosarcina barkeri (strain Fusaro / DSM 804)).